The sequence spans 324 residues: MYG1 protein C694.04c (324 aa).

The protein belongs to the MYG1 family.

The chain is MYG1 protein C694.04c from Schizosaccharomyces pombe (strain 972 / ATCC 24843) (Fission yeast).